The following is a 472-amino-acid chain: 3-isopropylmalate dehydratase large subunit (472 aa).

Cys352, Cys412, and Cys415 together coordinate [4Fe-4S] cluster.

Belongs to the aconitase/IPM isomerase family. LeuC type 1 subfamily. As to quaternary structure, heterodimer of LeuC and LeuD. It depends on [4Fe-4S] cluster as a cofactor.

It catalyses the reaction (2R,3S)-3-isopropylmalate = (2S)-2-isopropylmalate. It participates in amino-acid biosynthesis; L-leucine biosynthesis; L-leucine from 3-methyl-2-oxobutanoate: step 2/4. Its function is as follows. Catalyzes the isomerization between 2-isopropylmalate and 3-isopropylmalate, via the formation of 2-isopropylmaleate. In Roseiflexus castenholzii (strain DSM 13941 / HLO8), this protein is 3-isopropylmalate dehydratase large subunit.